Here is a 765-residue protein sequence, read N- to C-terminus: Spastin (765 aa).

Residues 1 to 94 (MVRTKNQSSS…TSGYGPRGGT (94 aa)) form a disordered region. Over 1-107 (MVRTKNQSSS…KQNLYVVSFP (107 aa)) the chain is Cytoplasmic. The required for localization to punctate cytoplasmic foci stretch occupies residues 1 to 195 (MVRTKNQSSS…ALLPLEMATN (195 aa)). The segment covering 8–19 (SSSSSASSSTKS) has biased composition (low complexity). The span at 48–58 (SSKLSSNRQRA) shows a compositional bias: polar residues. Residues 59 to 72 (TITTTTTSTTPGSS) show a composition bias toward low complexity. The segment at residues 108 to 128 (IIFLFNVLRSLIYQLFCIFRY) is an intramembrane region (helical). The Cytoplasmic portion of the chain corresponds to 129-765 (LYCASTKVIY…WSQDYGDITI (637 aa)). The segment at 193 to 765 (ATNRGGSGGY…WSQDYGDITI (573 aa)) is sufficient for interaction with microtubules and microtubule severing. Positions 218-293 (HRRAFEYISK…SMARDRLHFL (76 aa)) constitute an MIT domain. The tract at residues 329–462 (QTNSKAAAVE…GSGSGASTPM (134 aa)) is disordered. A compositionally biased stretch (low complexity) spans 355–364 (SGTGSSAGTS). Polar residues-rich tracts occupy residues 389–407 (NKSQ…STSV) and 428–444 (QFSS…RTPI). Positions 446–462 (NNAASGSGSGSGASTPM) are required for interaction with microtubules. Position 530–537 (530–537 (GPPGNGKT)) interacts with ATP.

It belongs to the AAA ATPase family. Spastin subfamily. As to quaternary structure, homohexamer. The homohexamer is stabilized by ATP-binding. The homohexamer may adopt a ring conformation through which microtubules pass prior to being severed. Interacts with microtubules. Interacts with atl; may be involved in microtubule dynamics.

It is found in the membrane. Its subcellular location is the cytoplasm. The protein resides in the cytoskeleton. The protein localises to the microtubule organizing center. It localises to the centrosome. It is found in the chromosome. Its subcellular location is the lipid droplet. It catalyses the reaction n ATP + n H2O + a microtubule = n ADP + n phosphate + (n+1) alpha/beta tubulin heterodimers.. ATP-dependent microtubule severing protein. Stimulates microtubule minus-end depolymerization and poleward microtubule flux in the mitotic spindle. Regulates microtubule stability in the neuromuscular junction synapse. Involved in lipid metabolism by regulating the size and distribution of lipid droplets. Involved in axon regeneration by regulating microtubule severing. In Drosophila mojavensis (Fruit fly), this protein is Spastin.